A 291-amino-acid polypeptide reads, in one-letter code: B-lymphocyte antigen CD20 (291 aa).

The Cytoplasmic segment spans residues 1 to 44; it reads MSGPFPAEPTKGPLAMQPAPKVNLKRTSSLVGPTQSFFMRESKA. Phosphoserine is present on S29. The chain crosses the membrane as a helical span at residues 45 to 65; the sequence is LGAVQIMNGLFHITLGGLLMI. At 66 to 68 the chain is on the extracellular side; sequence PTG. Residues 69–89 traverse the membrane as a helical segment; the sequence is VFAPICLSVWYPLWGGIMYII. The Cytoplasmic segment spans residues 90–111; sequence SGSLLAAAAEKTSRKSLVKAKV. Residues 112 to 132 traverse the membrane as a helical segment; sequence IMSSLSLFAAISGIILSIMDI. The Extracellular portion of the chain corresponds to 133-182; it reads LNMTLSHFLKMRRLELIQTSKPYVDIYDCEPSNSSEKNSPSTQYCNSIQS. The chain crosses the membrane as a helical span at residues 183 to 203; it reads VFLGILSAMLISAFFQKLVTA. The Cytoplasmic segment spans residues 204–291; that stretch reads GIVENEWKRM…SLPVENEIAP (88 aa). Residue C214 is the site of S-palmitoyl cysteine attachment. S219 carries the phosphoserine modification. Residue T233 is modified to Phosphothreonine. A compositionally biased stretch (acidic residues) spans 261–270; that stretch reads VQEEEEEEAE. The tract at residues 261–291 is disordered; it reads VQEEEEEEAEINFPAPPQEQESLPVENEIAP.

This sequence belongs to the MS4A family. Forms homotetramers. Interacts with the heavy and light chains of cell surface IgM, the antigen-binding components of the BCR. Phosphorylated.

Its subcellular location is the cell membrane. In terms of biological role, B-lymphocyte-specific membrane protein that plays a role in the regulation of cellular calcium influx necessary for the development, differentiation, and activation of B-lymphocytes. Functions as a store-operated calcium (SOC) channel component promoting calcium influx after activation by the B-cell receptor/BCR. The polypeptide is B-lymphocyte antigen CD20 (Ms4a1) (Mus musculus (Mouse)).